We begin with the raw amino-acid sequence, 138 residues long: Spermidine export protein MdtJ (138 aa).

Helical transmembrane passes span 1-21 (MIYW…TLSM), 30-50 (VVGM…LAMA), 54-74 (VALG…ITVF), and 81-101 (ESLS…IMLI).

The protein belongs to the drug/metabolite transporter (DMT) superfamily. Small multidrug resistance (SMR) (TC 2.A.7.1) family. MdtJ subfamily. As to quaternary structure, forms a complex with MdtI.

It localises to the cell inner membrane. In terms of biological role, catalyzes the excretion of spermidine. This Photorhabdus laumondii subsp. laumondii (strain DSM 15139 / CIP 105565 / TT01) (Photorhabdus luminescens subsp. laumondii) protein is Spermidine export protein MdtJ.